Here is a 342-residue protein sequence, read N- to C-terminus: Farnesyl pyrophosphate synthase 1 (342 aa).

Isopentenyl diphosphate is bound by residues Lys-47, Arg-50, and Gln-86. Asp-93 and Asp-97 together coordinate Mg(2+). Residue Arg-102 coordinates dimethylallyl diphosphate. Arg-103 contacts isopentenyl diphosphate. Dimethylallyl diphosphate-binding residues include Lys-190, Thr-191, Gln-229, Lys-246, and Lys-255.

This sequence belongs to the FPP/GGPP synthase family. Mg(2+) is required as a cofactor.

It localises to the cytoplasm. The enzyme catalyses isopentenyl diphosphate + dimethylallyl diphosphate = (2E)-geranyl diphosphate + diphosphate. It catalyses the reaction isopentenyl diphosphate + (2E)-geranyl diphosphate = (2E,6E)-farnesyl diphosphate + diphosphate. It participates in isoprenoid biosynthesis; farnesyl diphosphate biosynthesis; farnesyl diphosphate from geranyl diphosphate and isopentenyl diphosphate: step 1/1. It functions in the pathway isoprenoid biosynthesis; geranyl diphosphate biosynthesis; geranyl diphosphate from dimethylallyl diphosphate and isopentenyl diphosphate: step 1/1. Its function is as follows. Catalyzes the sequential condensation of isopentenyl pyrophosphate with the allylic pyrophosphates, dimethylallyl pyrophosphate, and then with the resultant geranylpyrophosphate to the ultimate product farnesyl pyrophosphate. The sequence is that of Farnesyl pyrophosphate synthase 1 (FPS1) from Lupinus albus (White lupine).